The sequence spans 524 residues: tRNA-2-methylthio-N(6)-dimethylallyladenosine synthase (524 aa).

The segment covering Met1–Ala12 has biased composition (basic and acidic residues). Residues Met1–Gly23 form a disordered region. The 117-residue stretch at Arg27 to His143 folds into the MTTase N-terminal domain. [4Fe-4S] cluster-binding residues include Cys36, Cys72, Cys106, Cys180, Cys184, and Cys187. The Radical SAM core domain maps to Arg166 to Glu402. Residues Gln405 to Val476 form the TRAM domain.

This sequence belongs to the methylthiotransferase family. MiaB subfamily. As to quaternary structure, monomer. [4Fe-4S] cluster serves as cofactor.

The protein resides in the cytoplasm. It carries out the reaction N(6)-dimethylallyladenosine(37) in tRNA + (sulfur carrier)-SH + AH2 + 2 S-adenosyl-L-methionine = 2-methylsulfanyl-N(6)-dimethylallyladenosine(37) in tRNA + (sulfur carrier)-H + 5'-deoxyadenosine + L-methionine + A + S-adenosyl-L-homocysteine + 2 H(+). In terms of biological role, catalyzes the methylthiolation of N6-(dimethylallyl)adenosine (i(6)A), leading to the formation of 2-methylthio-N6-(dimethylallyl)adenosine (ms(2)i(6)A) at position 37 in tRNAs that read codons beginning with uridine. This chain is tRNA-2-methylthio-N(6)-dimethylallyladenosine synthase, found in Corynebacterium efficiens (strain DSM 44549 / YS-314 / AJ 12310 / JCM 11189 / NBRC 100395).